The sequence spans 456 residues: Exodeoxyribonuclease 7 large subunit (456 aa).

The protein belongs to the XseA family. Heterooligomer composed of large and small subunits.

It is found in the cytoplasm. The catalysed reaction is Exonucleolytic cleavage in either 5'- to 3'- or 3'- to 5'-direction to yield nucleoside 5'-phosphates.. In terms of biological role, bidirectionally degrades single-stranded DNA into large acid-insoluble oligonucleotides, which are then degraded further into small acid-soluble oligonucleotides. This Lactobacillus johnsonii (strain CNCM I-12250 / La1 / NCC 533) protein is Exodeoxyribonuclease 7 large subunit.